We begin with the raw amino-acid sequence, 215 residues long: Urease accessory protein UreG (215 aa).

Residue Gly24–Thr31 participates in GTP binding.

Belongs to the SIMIBI class G3E GTPase family. UreG subfamily. As to quaternary structure, homodimer. UreD, UreF and UreG form a complex that acts as a GTP-hydrolysis-dependent molecular chaperone, activating the urease apoprotein by helping to assemble the nickel containing metallocenter of UreC. The UreE protein probably delivers the nickel.

Its subcellular location is the cytoplasm. Facilitates the functional incorporation of the urease nickel metallocenter. This process requires GTP hydrolysis, probably effectuated by UreG. This is Urease accessory protein UreG from Burkholderia orbicola (strain MC0-3).